A 456-amino-acid chain; its full sequence is Enolase (456 aa).

Glutamine 164 contributes to the (2R)-2-phosphoglycerate binding site. The active-site Proton donor is glutamate 207. Mg(2+) contacts are provided by aspartate 244, glutamate 287, and aspartate 314. (2R)-2-phosphoglycerate is bound by residues lysine 339, arginine 368, serine 369, and lysine 390. Lysine 339 acts as the Proton acceptor in catalysis.

The protein belongs to the enolase family. As to quaternary structure, component of the RNA degradosome, a multiprotein complex involved in RNA processing and mRNA degradation. Mg(2+) serves as cofactor.

It is found in the cytoplasm. The protein localises to the secreted. It localises to the cell surface. It carries out the reaction (2R)-2-phosphoglycerate = phosphoenolpyruvate + H2O. It participates in carbohydrate degradation; glycolysis; pyruvate from D-glyceraldehyde 3-phosphate: step 4/5. In terms of biological role, catalyzes the reversible conversion of 2-phosphoglycerate (2-PG) into phosphoenolpyruvate (PEP). It is essential for the degradation of carbohydrates via glycolysis. In Francisella tularensis subsp. tularensis (strain FSC 198), this protein is Enolase.